A 591-amino-acid chain; its full sequence is Ferric-chelate reductase 1 (591 aa).

Residues 6–26 (FTVSAFILLLHVSFVANYPSG) traverse the membrane as a helical segment. The 167-residue stretch at 13-179 (LLLHVSFVAN…FTTPEATIAP (167 aa)) folds into the Reelin domain. N50, N85, N308, N321, and N353 each carry an N-linked (GlcNAc...) asparagine glycan. Residues 216-331 (ERACVLLSFT…ASYYIFVADG (116 aa)) enclose the DOMON domain. Residues 335–533 (DGRIHKHSQQ…VGTEIILEIH (199 aa)) form the Cytochrome b561 domain. A helical transmembrane segment spans residues 372 to 392 (VHGALMFVAWMTTVSVGVLIA). H373 and H413 together coordinate heme b. 2 helical membrane passes run 416-436 (LMLT…IYRG) and 445-465 (HPYL…LAAF). Heme b contacts are provided by H445 and H481. A run of 3 helical transmembrane segments spans residues 490–510 (IIAV…LPGP), 514–534 (YAMI…EIHA), and 568–588 (VVLA…LSAI).

This sequence belongs to the FRRS1 family. It depends on heme b as a cofactor.

It is found in the membrane. Functionally, ferric-chelate reductases reduce Fe(3+) to Fe(2+) before its transport from the endosome to the cytoplasm. The chain is Ferric-chelate reductase 1 (FRRS1) from Bos taurus (Bovine).